The following is a 62-amino-acid chain: Protein DsrB (62 aa).

The protein belongs to the DsrB family.

This Citrobacter koseri (strain ATCC BAA-895 / CDC 4225-83 / SGSC4696) protein is Protein DsrB.